Reading from the N-terminus, the 205-residue chain is Protein TK0174 (205 aa).

The 195-residue stretch at 7 to 201 (EWGEFLVRLA…EEYPRGPVRR (195 aa)) folds into the AMMECR1 domain.

This Thermococcus kodakarensis (strain ATCC BAA-918 / JCM 12380 / KOD1) (Pyrococcus kodakaraensis (strain KOD1)) protein is Protein TK0174.